The primary structure comprises 470 residues: Argininosuccinate synthase (470 aa).

ATP contacts are provided by residues 17-25 (AFSGGLDTS) and Ala-43. Tyr-99 contributes to the L-citrulline binding site. Positions 129 and 131 each coordinate ATP. Positions 131, 135, and 136 each coordinate L-aspartate. Asn-135 is an L-citrulline binding site. Asp-136 provides a ligand contact to ATP. Arg-139 and Ser-192 together coordinate L-citrulline. Asp-194 provides a ligand contact to ATP. L-citrulline is bound by residues Thr-201, Glu-203, and Glu-280. The disordered stretch occupies residues 448-470 (IASRGESSGDELLDRAAMESGTD).

Belongs to the argininosuccinate synthase family. Type 2 subfamily. In terms of assembly, homotetramer.

The protein resides in the cytoplasm. The catalysed reaction is L-citrulline + L-aspartate + ATP = 2-(N(omega)-L-arginino)succinate + AMP + diphosphate + H(+). It participates in amino-acid biosynthesis; L-arginine biosynthesis; L-arginine from L-ornithine and carbamoyl phosphate: step 2/3. This Kineococcus radiotolerans (strain ATCC BAA-149 / DSM 14245 / SRS30216) protein is Argininosuccinate synthase.